The primary structure comprises 568 residues: MRQTMTFIPTLKEVPADAEVKSHQLLLRAGFIRQTASGIYSYLPLATLMLRKIETIIREELEAIGAAELLMPALQPAELWQESGRWNDYGPELMRLKDRASRDFALGPTHEEVITALLRDEVKSYKRLPLTLYQIQTKFRDEKRPRFGLLRGREFIMKDAYSFHATSESLDEVYNLMHQAYSNIFTRCGLEFRSVIADSGSIGGNESKEFMALSDIGEDTIAYSDASDYAANTEMAPVLYMEKKSHELEKDMEKVATPDQKSIADIVEFLEVPIEKTMKSMLYQVDDEVIMVLVRGDHEVNDIKIKNALDATNVELVDPAVAVELLGANFGSLGPINVPENTRVFADNAVKDIVNAVVGANEDGFHYINVNPDRDFSVTSYFDLRMIQVGDLSPDGQGVIKFAEGIEVGHIFKLGTKYSEAMNATILDENGRAQPIIMGCYGIGVSRILSAIAEQSNDENGFVWDKQISPFDLHLIPVNMKSEEQVAFAETLYSSLQDAGFSVLIDDRAERAGVKFADADLIGLPIRITVGKKAAEGVVEVKIRKTGEMIEVRQDELLNTLPILFGDK.

The protein belongs to the class-II aminoacyl-tRNA synthetase family. ProS type 1 subfamily. As to quaternary structure, homodimer.

Its subcellular location is the cytoplasm. The enzyme catalyses tRNA(Pro) + L-proline + ATP = L-prolyl-tRNA(Pro) + AMP + diphosphate. Catalyzes the attachment of proline to tRNA(Pro) in a two-step reaction: proline is first activated by ATP to form Pro-AMP and then transferred to the acceptor end of tRNA(Pro). As ProRS can inadvertently accommodate and process non-cognate amino acids such as alanine and cysteine, to avoid such errors it has two additional distinct editing activities against alanine. One activity is designated as 'pretransfer' editing and involves the tRNA(Pro)-independent hydrolysis of activated Ala-AMP. The other activity is designated 'posttransfer' editing and involves deacylation of mischarged Ala-tRNA(Pro). The misacylated Cys-tRNA(Pro) is not edited by ProRS. This Listeria monocytogenes serotype 4b (strain F2365) protein is Proline--tRNA ligase.